Here is a 341-residue protein sequence, read N- to C-terminus: uncharacterized protein (341 aa).

Residues 153–179 (AYTLSEKVMNAEREAEETRETIIREAH) adopt a coiled-coil conformation. Residues 319–335 (EQLQNPAPESAPSTSKT) are compositionally biased toward polar residues. Residues 319–341 (EQLQNPAPESAPSTSKTLRSKNP) form a disordered region.

This is an uncharacterized protein from Coxiella burnetii (strain RSA 493 / Nine Mile phase I).